Consider the following 329-residue polypeptide: MDSCDFRGLTSRRRTSNLKNYFVGATPLQKRLELVRRQNSDFPSPSRRKIPQCSQLQEDIDPQKVAFLLHKQWTIYSLTPLYKFSYSNLKDYSRLLSAFIVAEKQKGVAVEVGEDFNIKVIFSTLLGVKGTQRDHEAFLVQILSKSQSSREHREDKVLWTGWFCCVFGESLQETVSEDFTCLPLFLANGAESNTSLIRDWFQKTFDCCFSPLAISAFNLSWMAAMWTACKMDRYMATTEFLWSVPCSPQSLDISYAIHPEDAKALWESVHKTPGEVTQEEVDLFMNCLYSHFHRHFKIHLAATRLVRVSTSVASAHTDGKIKVSLNRSN.

A phosphoserine mark is found at Ser40 and Ser54.

This sequence belongs to the CENP-L/IML3 family. Component of the CENPA-CAD complex, composed of CENPI, CENPK, CENPL, CENPO, CENPP, CENPQ, CENPR and CENPS. The CENPA-CAD complex interacts with the CENPA-NAC complex, at least composed of CENPA, CENPC, CENPH, CENPM, CENPN, CENPT and CENPU.

It localises to the nucleus. The protein resides in the chromosome. Its subcellular location is the centromere. Its function is as follows. Component of the CENPA-CAD (nucleosome distal) complex, a complex recruited to centromeres which is involved in assembly of kinetochore proteins, mitotic progression and chromosome segregation. May be involved in incorporation of newly synthesized CENPA into centromeres via its interaction with the CENPA-NAC complex. This Mus musculus (Mouse) protein is Centromere protein L (Cenpl).